Here is a 178-residue protein sequence, read N- to C-terminus: Inorganic pyrophosphatase (178 aa).

Substrate is bound by residues Lys30, Arg44, and Tyr56. Mg(2+)-binding residues include Asp66, Asp71, and Asp103. Position 142 (Tyr142) interacts with substrate.

Belongs to the PPase family. Homohexamer. Mg(2+) serves as cofactor.

It localises to the cytoplasm. It catalyses the reaction diphosphate + H2O = 2 phosphate + H(+). Its function is as follows. Catalyzes the hydrolysis of inorganic pyrophosphate (PPi) forming two phosphate ions. In Xylella fastidiosa (strain 9a5c), this protein is Inorganic pyrophosphatase.